The chain runs to 519 residues: Probable DNA ligase (519 aa).

Glutamate 221 lines the ATP pocket. The N6-AMP-lysine intermediate role is filled by lysine 223. ATP contacts are provided by arginine 228, arginine 243, glutamate 272, phenylalanine 312, arginine 384, and lysine 390.

Belongs to the ATP-dependent DNA ligase family. Mg(2+) serves as cofactor.

The catalysed reaction is ATP + (deoxyribonucleotide)n-3'-hydroxyl + 5'-phospho-(deoxyribonucleotide)m = (deoxyribonucleotide)n+m + AMP + diphosphate.. In terms of biological role, DNA ligase that seals nicks in double-stranded DNA during DNA replication, DNA recombination and DNA repair. The sequence is that of Probable DNA ligase from Mycolicibacterium paratuberculosis (strain ATCC BAA-968 / K-10) (Mycobacterium paratuberculosis).